A 151-amino-acid chain; its full sequence is MSSLPRRIIKETQRLMQEPVPGINAIPDENNARYFHVIVTGPNDSPFEGGVFKLELFLPEDYPMSAPKVRFITKIYHPNIDRLGRICLDVLKDKWSPALQIRTILLSIQALLSAPNPDDPLANDVAELWKVNEAEAIRNAREWTQKYAVED.

Positions 3 to 149 (SLPRRIIKET…AREWTQKYAV (147 aa)) constitute a UBC core domain. Cys87 acts as the Glycyl thioester intermediate in catalysis.

The protein belongs to the ubiquitin-conjugating enzyme family.

It carries out the reaction S-ubiquitinyl-[E1 ubiquitin-activating enzyme]-L-cysteine + [E2 ubiquitin-conjugating enzyme]-L-cysteine = [E1 ubiquitin-activating enzyme]-L-cysteine + S-ubiquitinyl-[E2 ubiquitin-conjugating enzyme]-L-cysteine.. Its pathway is protein modification; protein ubiquitination. In terms of biological role, catalyzes the covalent attachment of ubiquitin to other proteins. In Drosophila melanogaster (Fruit fly), this protein is Ubiquitin-conjugating enzyme E2 N (ben).